The sequence spans 340 residues: MTKITVVGAGSWGTALAMVLADNGHDVRIWGNRSELMDEMNTKHENSRYLPGITLPSTIVAYSSLEEALVDVNTVLLVVPTKAYRDVLQEMKEIVTEPITWIHASKGIEPGTSKRISEVIEEEIPENLIKDVVVLSGPSHAEEVGLRQATTVTSAAKRMEAAEEVQDLFMNSYFRVYTNPDIVGVELGGALKNIIALAAGITDGLGLGDNAKAALMTRGLTEIARLGRKMGGNPLTFAGLTGMGDLIVTCTSVHSRNWRAGNMLGKGHSLEEVLESMGMVVEGVRTTKAAHELAEKMEVEMPITAALYDVLFNGNNVKDAVGSLMGRVRKHEVEAIPDLL.

NADPH contacts are provided by Ser-11, Trp-12, Arg-33, and Lys-106. Sn-glycerol 3-phosphate is bound by residues Lys-106, Gly-137, and Ser-139. Ala-141 is an NADPH binding site. Sn-glycerol 3-phosphate-binding residues include Lys-192, Asp-245, Ser-255, Arg-256, and Asn-257. The active-site Proton acceptor is Lys-192. NADPH is bound at residue Arg-256. Positions 280 and 282 each coordinate NADPH.

Belongs to the NAD-dependent glycerol-3-phosphate dehydrogenase family.

It localises to the cytoplasm. The enzyme catalyses sn-glycerol 3-phosphate + NAD(+) = dihydroxyacetone phosphate + NADH + H(+). The catalysed reaction is sn-glycerol 3-phosphate + NADP(+) = dihydroxyacetone phosphate + NADPH + H(+). The protein operates within membrane lipid metabolism; glycerophospholipid metabolism. Its function is as follows. Catalyzes the reduction of the glycolytic intermediate dihydroxyacetone phosphate (DHAP) to sn-glycerol 3-phosphate (G3P), the key precursor for phospholipid synthesis. The chain is Glycerol-3-phosphate dehydrogenase [NAD(P)+] from Bacillus cereus (strain G9842).